Here is a 133-residue protein sequence, read N- to C-terminus: MRRMLLHLSVLTLSCVWATAMEIPMSTVVKETLTQLSAHRALLTSNETMRLPVPTHKNHQLCIGEIFQGLDILKNQTVRGGTVEMLFQNLSLIKKYIDRQKEKCGEERRRTRQFLDYLQEFLGVMSTEWAMEG.

The first 20 residues, 1–20, serve as a signal peptide directing secretion; it reads MRRMLLHLSVLTLSCVWATA. N-linked (GlcNAc...) asparagine glycosylation is found at asparagine 46, asparagine 75, and asparagine 89.

This sequence belongs to the IL-5 family. As to quaternary structure, homodimer; disulfide-linked. Interacts with IL5RA. Interacts with CSF2RB. In terms of tissue distribution, expressed in lymphoid cells, including spleen, thymus, lymph nodes and peripheral blood mononuclear cells.

The protein resides in the secreted. Its function is as follows. Homodimeric cytokine expressed predominantly by T-lymphocytes and NK cells that plays an important role in the survival, differentiation, and chemotaxis of eosinophils. Also acts on activated and resting B-cells to induce immunoglobulin production, growth, and differentiation. Mechanistically, exerts its biological effects through a receptor composed of IL5RA subunit and the cytokine receptor common subunit beta/CSF2RB. Binding to the receptor leads to activation of various kinases including LYN, SYK and JAK2 and thereby propagates signals through the RAS-MAPK and JAK-STAT5 pathways respectively. In Mus musculus (Mouse), this protein is Interleukin-5 (Il5).